A 179-amino-acid polypeptide reads, in one-letter code: Negative modulator of initiation of replication (179 aa).

The interaction with DNA stretch occupies residues 86-87 (AV).

This sequence belongs to the SeqA family. As to quaternary structure, homodimer. Polymerizes to form helical filaments.

It localises to the cytoplasm. Its function is as follows. Negative regulator of replication initiation, which contributes to regulation of DNA replication and ensures that replication initiation occurs exactly once per chromosome per cell cycle. Binds to pairs of hemimethylated GATC sequences in the oriC region, thus preventing assembly of replication proteins and re-initiation at newly replicated origins. Repression is relieved when the region becomes fully methylated. This is Negative modulator of initiation of replication from Shewanella woodyi (strain ATCC 51908 / MS32).